Here is a 230-residue protein sequence, read N- to C-terminus: Protein-L-isoaspartate O-methyltransferase (230 aa).

Residue Ser-68 is part of the active site.

This sequence belongs to the methyltransferase superfamily. L-isoaspartyl/D-aspartyl protein methyltransferase family.

It is found in the cytoplasm. It carries out the reaction [protein]-L-isoaspartate + S-adenosyl-L-methionine = [protein]-L-isoaspartate alpha-methyl ester + S-adenosyl-L-homocysteine. Its function is as follows. Catalyzes the methyl esterification of L-isoaspartyl residues in peptides and proteins that result from spontaneous decomposition of normal L-aspartyl and L-asparaginyl residues. It plays a role in the repair and/or degradation of damaged proteins. The polypeptide is Protein-L-isoaspartate O-methyltransferase (Salinibacter ruber (strain DSM 13855 / M31)).